The chain runs to 172 residues: Putative phosphoesterase BCG9842_B4061 (172 aa).

H34 acts as the Proton donor in catalysis. 2 consecutive short sequence motifs (HXTX) follow at residues 34–37 (HITL) and 115–118 (HLTI). The Proton acceptor role is filled by H115.

The protein belongs to the 2H phosphoesterase superfamily. YjcG family.

This is Putative phosphoesterase BCG9842_B4061 from Bacillus cereus (strain G9842).